Consider the following 403-residue polypeptide: Argininosuccinate synthase (403 aa).

Residues 12 to 20 (AYSGGLDTS) and Ala39 each bind ATP. Tyr91 serves as a coordination point for L-citrulline. Residue Gly121 coordinates ATP. Residues Thr123, Asn127, and Asp128 each contribute to the L-aspartate site. Asn127 is an L-citrulline binding site. L-citrulline-binding residues include Arg131, Ser180, Ser189, Glu265, and Tyr277.

This sequence belongs to the argininosuccinate synthase family. Type 1 subfamily. As to quaternary structure, homotetramer.

It localises to the cytoplasm. It catalyses the reaction L-citrulline + L-aspartate + ATP = 2-(N(omega)-L-arginino)succinate + AMP + diphosphate + H(+). The protein operates within amino-acid biosynthesis; L-arginine biosynthesis; L-arginine from L-ornithine and carbamoyl phosphate: step 2/3. This chain is Argininosuccinate synthase, found in Buchnera aphidicola subsp. Acyrthosiphon pisum (strain 5A).